The primary structure comprises 214 residues: Phosphatidylserine decarboxylase proenzyme (214 aa).

The active-site Schiff-base intermediate with substrate; via pyruvic acid is Ser182. At Ser182 the chain carries Pyruvic acid (Ser); by autocatalysis.

The protein belongs to the phosphatidylserine decarboxylase family. PSD-A subfamily. In terms of assembly, heterodimer of a large membrane-associated beta subunit and a small pyruvoyl-containing alpha subunit. Requires pyruvate as cofactor. In terms of processing, is synthesized initially as an inactive proenzyme. Formation of the active enzyme involves a self-maturation process in which the active site pyruvoyl group is generated from an internal serine residue via an autocatalytic post-translational modification. Two non-identical subunits are generated from the proenzyme in this reaction, and the pyruvate is formed at the N-terminus of the alpha chain, which is derived from the carboxyl end of the proenzyme. The post-translation cleavage follows an unusual pathway, termed non-hydrolytic serinolysis, in which the side chain hydroxyl group of the serine supplies its oxygen atom to form the C-terminus of the beta chain, while the remainder of the serine residue undergoes an oxidative deamination to produce ammonia and the pyruvoyl prosthetic group on the alpha chain.

It is found in the cell membrane. The catalysed reaction is a 1,2-diacyl-sn-glycero-3-phospho-L-serine + H(+) = a 1,2-diacyl-sn-glycero-3-phosphoethanolamine + CO2. It functions in the pathway phospholipid metabolism; phosphatidylethanolamine biosynthesis; phosphatidylethanolamine from CDP-diacylglycerol: step 2/2. Functionally, catalyzes the formation of phosphatidylethanolamine (PtdEtn) from phosphatidylserine (PtdSer). This chain is Phosphatidylserine decarboxylase proenzyme, found in Burkholderia vietnamiensis (strain G4 / LMG 22486) (Burkholderia cepacia (strain R1808)).